Reading from the N-terminus, the 747-residue chain is AMP deaminase 1 (747 aa).

The residue at position 81 (threonine 81) is a Phosphothreonine. At serine 85 the chain carries Phosphoserine. A Phosphotyrosine modification is found at tyrosine 216. Zn(2+) is bound by residues histidine 303 and histidine 305. Substrate-binding positions include histidine 305 and 374 to 379 (KFNDKY). Serine 441 carries the post-translational modification Phosphoserine. Residue histidine 572 participates in Zn(2+) binding. Glutamate 575 contacts substrate. Histidine 594 (proton acceptor) is an active-site residue. Aspartate 649 contributes to the Zn(2+) binding site. Substrate is bound at residue 650-653 (DPMQ).

The protein belongs to the metallo-dependent hydrolases superfamily. Adenosine and AMP deaminases family. Homotetramer. The cofactor is Zn(2+).

The enzyme catalyses AMP + H2O + H(+) = IMP + NH4(+). Its pathway is purine metabolism; IMP biosynthesis via salvage pathway; IMP from AMP: step 1/1. In terms of biological role, AMP deaminase plays a critical role in energy metabolism. In Homo sapiens (Human), this protein is AMP deaminase 1.